Here is a 476-residue protein sequence, read N- to C-terminus: MNFKSTIGLEVHFELKTKSKIFSPSPVTYGAEQNTETNVIDWAMPGTLPMVNKNVYRLGIMVAIATHAHILPTTHFDRKNYFYPDNPKAYQITQFFQPLARDGYIEVEVRGKKKRIGIHEMHIEEDAGKNTHGTNGFSYVDLNRQGVPLLEVVSEPDMEDPEEAYAYLEKLRKIVQFTGASDVKMEEGSMRVDTNISIRPVGQKELGTKVEMKNLNSFDHVRRSLAYEEKRQEQVLLAGGHIQLSTRRFDEATGKTVLERVKEGASDYRYFPEPDIAPDHISQEWIDQIAKELPKSPFDRYDDYVNKFGLKPYDANVLLQTKESSDFFDAAVAAGADPTLAANWMNTQVNGYLNDHRVSLNDIKLTPEHLAEMIKLIKDGTISSKIAKKVFAETIANGTDPKKYVEDNGMVQLSDTSVLAPMVKKVVDDNPQSVEDFKNGKDRAIGFLVGQIMKQTRGKANPKMVNKLLNQELQNR.

It belongs to the GatB/GatE family. GatB subfamily. As to quaternary structure, heterotrimer of A, B and C subunits.

It catalyses the reaction L-glutamyl-tRNA(Gln) + L-glutamine + ATP + H2O = L-glutaminyl-tRNA(Gln) + L-glutamate + ADP + phosphate + H(+). The enzyme catalyses L-aspartyl-tRNA(Asn) + L-glutamine + ATP + H2O = L-asparaginyl-tRNA(Asn) + L-glutamate + ADP + phosphate + 2 H(+). In terms of biological role, allows the formation of correctly charged Asn-tRNA(Asn) or Gln-tRNA(Gln) through the transamidation of misacylated Asp-tRNA(Asn) or Glu-tRNA(Gln) in organisms which lack either or both of asparaginyl-tRNA or glutaminyl-tRNA synthetases. The reaction takes place in the presence of glutamine and ATP through an activated phospho-Asp-tRNA(Asn) or phospho-Glu-tRNA(Gln). This Lactobacillus helveticus (strain DPC 4571) protein is Aspartyl/glutamyl-tRNA(Asn/Gln) amidotransferase subunit B.